The sequence spans 472 residues: Uronate isomerase (472 aa).

This sequence belongs to the metallo-dependent hydrolases superfamily. Uronate isomerase family.

The catalysed reaction is D-glucuronate = D-fructuronate. It catalyses the reaction aldehydo-D-galacturonate = keto-D-tagaturonate. It participates in carbohydrate metabolism; pentose and glucuronate interconversion. The sequence is that of Uronate isomerase from Xanthomonas euvesicatoria pv. vesicatoria (strain 85-10) (Xanthomonas campestris pv. vesicatoria).